Here is a 351-residue protein sequence, read N- to C-terminus: Dual-specificity RNA methyltransferase RlmN (351 aa).

E90 acts as the Proton acceptor in catalysis. One can recognise a Radical SAM core domain in the interval 96 to 330 (EKDHYTACLS…ATLRKSKGSD (235 aa)). C103 and C335 are joined by a disulfide. [4Fe-4S] cluster is bound by residues C110, C114, and C117. Residues 162–163 (GE), S194, 216–218 (SLH), and N292 each bind S-adenosyl-L-methionine. The active-site S-methylcysteine intermediate is the C335.

It belongs to the radical SAM superfamily. RlmN family. Requires [4Fe-4S] cluster as cofactor.

It localises to the cytoplasm. The enzyme catalyses adenosine(2503) in 23S rRNA + 2 reduced [2Fe-2S]-[ferredoxin] + 2 S-adenosyl-L-methionine = 2-methyladenosine(2503) in 23S rRNA + 5'-deoxyadenosine + L-methionine + 2 oxidized [2Fe-2S]-[ferredoxin] + S-adenosyl-L-homocysteine. It catalyses the reaction adenosine(37) in tRNA + 2 reduced [2Fe-2S]-[ferredoxin] + 2 S-adenosyl-L-methionine = 2-methyladenosine(37) in tRNA + 5'-deoxyadenosine + L-methionine + 2 oxidized [2Fe-2S]-[ferredoxin] + S-adenosyl-L-homocysteine. Specifically methylates position 2 of adenine 2503 in 23S rRNA and position 2 of adenine 37 in tRNAs. m2A2503 modification seems to play a crucial role in the proofreading step occurring at the peptidyl transferase center and thus would serve to optimize ribosomal fidelity. The protein is Dual-specificity RNA methyltransferase RlmN of Solidesulfovibrio magneticus (strain ATCC 700980 / DSM 13731 / RS-1) (Desulfovibrio magneticus).